Consider the following 500-residue polypeptide: Probable cytosol aminopeptidase (500 aa).

Mn(2+)-binding residues include Lys-264 and Asp-269. Lys-276 is an active-site residue. 3 residues coordinate Mn(2+): Asp-287, Asp-346, and Glu-348. The active site involves Arg-350.

It belongs to the peptidase M17 family. The cofactor is Mn(2+).

It localises to the cytoplasm. The enzyme catalyses Release of an N-terminal amino acid, Xaa-|-Yaa-, in which Xaa is preferably Leu, but may be other amino acids including Pro although not Arg or Lys, and Yaa may be Pro. Amino acid amides and methyl esters are also readily hydrolyzed, but rates on arylamides are exceedingly low.. It catalyses the reaction Release of an N-terminal amino acid, preferentially leucine, but not glutamic or aspartic acids.. Functionally, presumably involved in the processing and regular turnover of intracellular proteins. Catalyzes the removal of unsubstituted N-terminal amino acids from various peptides. The sequence is that of Probable cytosol aminopeptidase from Nitrobacter winogradskyi (strain ATCC 25391 / DSM 10237 / CIP 104748 / NCIMB 11846 / Nb-255).